A 343-amino-acid chain; its full sequence is Heat-inducible transcription repressor HrcA (343 aa).

It belongs to the HrcA family.

Its function is as follows. Negative regulator of class I heat shock genes (grpE-dnaK-dnaJ and groELS operons). Prevents heat-shock induction of these operons. The sequence is that of Heat-inducible transcription repressor HrcA from Caldanaerobacter subterraneus subsp. tengcongensis (strain DSM 15242 / JCM 11007 / NBRC 100824 / MB4) (Thermoanaerobacter tengcongensis).